A 369-amino-acid chain; its full sequence is Aminomethyltransferase (369 aa).

The protein belongs to the GcvT family. As to quaternary structure, the glycine cleavage system is composed of four proteins: P, T, L and H.

The catalysed reaction is N(6)-[(R)-S(8)-aminomethyldihydrolipoyl]-L-lysyl-[protein] + (6S)-5,6,7,8-tetrahydrofolate = N(6)-[(R)-dihydrolipoyl]-L-lysyl-[protein] + (6R)-5,10-methylene-5,6,7,8-tetrahydrofolate + NH4(+). In terms of biological role, the glycine cleavage system catalyzes the degradation of glycine. This is Aminomethyltransferase from Xanthomonas oryzae pv. oryzae (strain MAFF 311018).